Reading from the N-terminus, the 580-residue chain is Rho guanine nucleotide exchange factor 25 (580 aa).

Residues A48–C67 are compositionally biased toward low complexity. Disordered stretches follow at residues A48–S76 and L128–A157. The DH domain occupies R160–M336. An important for binding to Rho GTPases region spans residues L278–Q299. The PH domain occupies K348 to E466. The sufficient to bind activated GNAQ stretch occupies residues S467–R493. Disordered regions lie at residues Q482–P524 and A545–L580. A compositionally biased stretch (polar residues) spans D509–N520. A compositionally biased stretch (pro residues) spans D555–P566.

In terms of assembly, interacts (via the DH domain) with POPDC1 (via the C-terminus cytoplasmic tail). Interacts with activated GNAQ and GNA11. Interacts with RHOA, CDC42 and RAC1. As to expression, isoform 1 and isoform 2 are highly expressed in excitable tissues, such as brain, heart and muscle. Also detected in kidney and liver.

The protein resides in the cell membrane. It is found in the cytoplasm. The protein localises to the myofibril. Its subcellular location is the sarcomere. Its function is as follows. May play a role in actin cytoskeleton reorganization in different tissues since its activation induces formation of actin stress fibers. It works as a guanine nucleotide exchange factor for Rho family of small GTPases. Links specifically G alpha q/11-coupled receptors to RHOA activation. May be an important regulator of processes involved in axon and dendrite formation. In neurons seems to be an exchange factor primarily for RAC1. Involved in skeletal myogenesis. This chain is Rho guanine nucleotide exchange factor 25 (ARHGEF25), found in Homo sapiens (Human).